The sequence spans 782 residues: Polyribonucleotide nucleotidyltransferase (782 aa).

2 residues coordinate Mg(2+): aspartate 514 and aspartate 520. The 60-residue stretch at 580–639 (PRIITIKIPVDQIGAVIGPKGKIINQIQDDTGAEITIEDDGTIYIGATEGTAAEAARAAI) folds into the KH domain. Positions 651-723 (GERYLGTVVK…ARGKLSLVPV (73 aa)) constitute an S1 motif domain. A compositionally biased stretch (low complexity) spans 734–753 (AGAGESAASGGAPRSAGGPQ). The disordered stretch occupies residues 734–782 (AGAGESAASGGAPRSAGGPQPREHQGPGRPRGRGGDHGGEGRQRTRRRH). Residues 766-776 (RGGDHGGEGRQ) show a composition bias toward basic and acidic residues.

This sequence belongs to the polyribonucleotide nucleotidyltransferase family. Mg(2+) serves as cofactor.

It is found in the cytoplasm. The catalysed reaction is RNA(n+1) + phosphate = RNA(n) + a ribonucleoside 5'-diphosphate. Involved in mRNA degradation. Catalyzes the phosphorolysis of single-stranded polyribonucleotides processively in the 3'- to 5'-direction. The polypeptide is Polyribonucleotide nucleotidyltransferase (Acidothermus cellulolyticus (strain ATCC 43068 / DSM 8971 / 11B)).